We begin with the raw amino-acid sequence, 314 residues long: Olfactory receptor 10T2 (314 aa).

The Extracellular portion of the chain corresponds to 1-26; it reads MRGFNKTTVVTQFILVGFSSLGELQL. N5 carries an N-linked (GlcNAc...) asparagine glycan. A helical transmembrane segment spans residues 27–47; sequence LLFVIFLLLYLTILVANVTIM. Over 48–55 the chain is Cytoplasmic; that stretch reads AVIRFSWT. A helical membrane pass occupies residues 56 to 76; that stretch reads LHTPMYGFLFILSFSESCYTF. The Extracellular segment spans residues 77–100; it reads VIIPQLLVHLLSDTKTISFMACAT. C98 and C190 form a disulfide bridge. The chain crosses the membrane as a helical span at residues 101–121; the sequence is QLFFFLGFACTNCLLIAVMGY. Residues 122 to 140 are Cytoplasmic-facing; the sequence is DRYVAICHPLRYTLIINKR. The chain crosses the membrane as a helical span at residues 141 to 161; the sequence is LGLELISLSGATGFFIALVAT. Over 162-198 the chain is Extracellular; the sequence is NLICDMRFCGPNRVNHYFCDMAPVIKLACTDTHVKEL. A helical membrane pass occupies residues 199–218; it reads ALFSLSILVIMVPFLLILIS. Over 219–237 the chain is Cytoplasmic; that stretch reads YGFIVNTILKIPSAEGKKA. The helical transmembrane segment at 238–258 threads the bilayer; that stretch reads FVTCASHLTVVFVHYGCASII. Residues 259–271 are Extracellular-facing; sequence YLRPKSKSASDKD. Residues 272 to 292 traverse the membrane as a helical segment; sequence QLVAVTYTVVTPLLNPLVYSL. The Cytoplasmic segment spans residues 293–314; sequence RNKEVKTALKRVLGMPVATKMS.

It belongs to the G-protein coupled receptor 1 family.

The protein resides in the cell membrane. Odorant receptor. In Homo sapiens (Human), this protein is Olfactory receptor 10T2 (OR10T2).